The following is a 425-amino-acid chain: Acyl-lipid (8-3)-desaturase (425 aa).

The interval 1–25 (MPPRDSYSYAAPPSAQLHEVDTPQE) is disordered. The Cytochrome b5 heme-binding domain maps to 18 to 93 (HEVDTPQEHD…SRPVHKGYSP (76 aa)). Residues histidine 47 and histidine 69 each coordinate heme. A helical transmembrane segment spans residues 134 to 154 (VAGAALIWHGYTFAGIAMLGV). Residues 164-168 (HEGGH) carry the Histidine box-1 motif. Residues 175 to 197 (IAFDRAIQVACYGLGCGMSGAWW) traverse the membrane as a helical segment. The short motif at 201-206 (HNKHHA) is the Histidine box-2 element. 2 helical membrane-spanning segments follow: residues 241-261 (WLSM…ALGW) and 297-317 (GAGY…MYIF). The short motif at 365-369 (QIEHH) is the Histidine box-3 element.

This sequence belongs to the fatty acid desaturase type 1 family. It depends on Fe(2+) as a cofactor.

Its subcellular location is the membrane. The enzyme catalyses an (8Z,11Z,14Z)-icosatrienoyl-containing glycerolipid + 2 Fe(II)-[cytochrome b5] + O2 + 2 H(+) = (5Z,8Z,11Z,14Z)-eicosatetraenoyl-containing glycerolipid + 2 Fe(III)-[cytochrome b5] + 2 H2O. The catalysed reaction is an (8Z,11Z,14Z,17Z)-eicosatetraenoyl-containing glycerolipid + 2 Fe(II)-[cytochrome b5] + O2 + 2 H(+) = a (5Z,8Z,11Z,14Z,17Z)-eicosapentaenoyl-containing glycerolipid + 2 Fe(III)-[cytochrome b5] + 2 H2O. Its function is as follows. Fatty acid desaturase that introduces a cis double bond at the 5-position in 20-carbon polyunsaturated fatty acids incorporated in a glycerolipid that contain a Delta(8) double bond. In Rebecca salina (Marine microalga), this protein is Acyl-lipid (8-3)-desaturase.